The following is a 339-amino-acid chain: Glycerol-3-phosphate dehydrogenase [NAD(P)+] (339 aa).

NADPH is bound by residues Ser15, Tyr16, His36, and Lys110. 3 residues coordinate sn-glycerol 3-phosphate: Lys110, Gly139, and Thr141. Ala143 provides a ligand contact to NADPH. Sn-glycerol 3-phosphate is bound by residues Lys195, Asp248, Ser258, Arg259, and Asn260. Residue Lys195 is the Proton acceptor of the active site. Arg259 serves as a coordination point for NADPH. Positions 283 and 285 each coordinate NADPH.

Belongs to the NAD-dependent glycerol-3-phosphate dehydrogenase family.

It localises to the cytoplasm. It catalyses the reaction sn-glycerol 3-phosphate + NAD(+) = dihydroxyacetone phosphate + NADH + H(+). The catalysed reaction is sn-glycerol 3-phosphate + NADP(+) = dihydroxyacetone phosphate + NADPH + H(+). It participates in membrane lipid metabolism; glycerophospholipid metabolism. Functionally, catalyzes the reduction of the glycolytic intermediate dihydroxyacetone phosphate (DHAP) to sn-glycerol 3-phosphate (G3P), the key precursor for phospholipid synthesis. The protein is Glycerol-3-phosphate dehydrogenase [NAD(P)+] of Klebsiella pneumoniae (strain 342).